Here is a 522-residue protein sequence, read N- to C-terminus: 2-isopropylmalate synthase (522 aa).

One can recognise a Pyruvate carboxyltransferase domain in the interval 5-267 (VIIFDTTLRD…ETGINAKEIH (263 aa)). Asp14, His202, His204, and Asn238 together coordinate Mn(2+). The tract at residues 392-522 (QLQQLVVQSD…MQKNRELGGV (131 aa)) is regulatory domain.

The protein belongs to the alpha-IPM synthase/homocitrate synthase family. LeuA type 1 subfamily. As to quaternary structure, homodimer. Requires Mn(2+) as cofactor.

Its subcellular location is the cytoplasm. It carries out the reaction 3-methyl-2-oxobutanoate + acetyl-CoA + H2O = (2S)-2-isopropylmalate + CoA + H(+). Its pathway is amino-acid biosynthesis; L-leucine biosynthesis; L-leucine from 3-methyl-2-oxobutanoate: step 1/4. Its function is as follows. Catalyzes the condensation of the acetyl group of acetyl-CoA with 3-methyl-2-oxobutanoate (2-ketoisovalerate) to form 3-carboxy-3-hydroxy-4-methylpentanoate (2-isopropylmalate). The chain is 2-isopropylmalate synthase from Shewanella baltica (strain OS195).